A 147-amino-acid chain; its full sequence is D-aminoacyl-tRNA deacylase (147 aa).

Residues 136–137 (GP) carry the Gly-cisPro motif, important for rejection of L-amino acids motif.

This sequence belongs to the DTD family. In terms of assembly, homodimer.

It localises to the cytoplasm. It carries out the reaction glycyl-tRNA(Ala) + H2O = tRNA(Ala) + glycine + H(+). The enzyme catalyses a D-aminoacyl-tRNA + H2O = a tRNA + a D-alpha-amino acid + H(+). Functionally, an aminoacyl-tRNA editing enzyme that deacylates mischarged D-aminoacyl-tRNAs. Also deacylates mischarged glycyl-tRNA(Ala), protecting cells against glycine mischarging by AlaRS. Acts via tRNA-based rather than protein-based catalysis; rejects L-amino acids rather than detecting D-amino acids in the active site. By recycling D-aminoacyl-tRNA to D-amino acids and free tRNA molecules, this enzyme counteracts the toxicity associated with the formation of D-aminoacyl-tRNA entities in vivo and helps enforce protein L-homochirality. The polypeptide is D-aminoacyl-tRNA deacylase (Streptococcus equi subsp. equi (strain 4047)).